The chain runs to 315 residues: MSLMNWFEDKRRFGGLIGAFIEKATKGYILNERERDKYIKIDTTKGLWTRCDSCENMLYVRFLKQNKRICEECGYHLQMSSIERIELLIDHGTWQPMYEDMVARDVLKFSDEDSYKNRVIFYQKRTGLTDAIQTGIGKLNKNLVALGVMDFQFMGGSMGSVVGEKITRLIEYAFKESLPLIIVCSSGGARMQEGTLSLMQMAKITSLLQFYQVRKKLFYIAILTYPTTGGVTASFGMLGDIIIAEPKAYIAFAGKRVIEQTLRQKIPDGFQVAESLFYSGLLDLIVPRTFLKGVLGEIFELYSLGVYKESNSYLF.

A CoA carboxyltransferase N-terminal domain is found at 47-315; the sequence is LWTRCDSCEN…VYKESNSYLF (269 aa). The Zn(2+) site is built by cysteine 51, cysteine 54, cysteine 70, and cysteine 73. The C4-type zinc finger occupies 51–73; sequence CDSCENMLYVRFLKQNKRICEEC.

It belongs to the AccD/PCCB family. Acetyl-CoA carboxylase is a heterohexamer composed of biotin carboxyl carrier protein, biotin carboxylase and 2 subunits each of ACCase subunit alpha and ACCase plastid-coded subunit beta (accD). It depends on Zn(2+) as a cofactor.

It localises to the plastid. The protein resides in the chloroplast stroma. It catalyses the reaction N(6)-carboxybiotinyl-L-lysyl-[protein] + acetyl-CoA = N(6)-biotinyl-L-lysyl-[protein] + malonyl-CoA. It participates in lipid metabolism; malonyl-CoA biosynthesis; malonyl-CoA from acetyl-CoA: step 1/1. Functionally, component of the acetyl coenzyme A carboxylase (ACC) complex. Biotin carboxylase (BC) catalyzes the carboxylation of biotin on its carrier protein (BCCP) and then the CO(2) group is transferred by the transcarboxylase to acetyl-CoA to form malonyl-CoA. This Physcomitrium patens (Spreading-leaved earth moss) protein is Acetyl-coenzyme A carboxylase carboxyl transferase subunit beta, chloroplastic.